The sequence spans 77 residues: NAD(P)H-quinone oxidoreductase subunit L (77 aa).

Helical transmembrane passes span 12-32 (LIAYIGIIFTYLLVIPLLLFY) and 47-67 (LGIYGLVFLFFPGLILFSPFL).

This sequence belongs to the complex I NdhL subunit family. NDH-1 can be composed of about 15 different subunits; different subcomplexes with different compositions have been identified which probably have different functions.

Its subcellular location is the cellular thylakoid membrane. The enzyme catalyses a plastoquinone + NADH + (n+1) H(+)(in) = a plastoquinol + NAD(+) + n H(+)(out). It catalyses the reaction a plastoquinone + NADPH + (n+1) H(+)(in) = a plastoquinol + NADP(+) + n H(+)(out). Its function is as follows. NDH-1 shuttles electrons from an unknown electron donor, via FMN and iron-sulfur (Fe-S) centers, to quinones in the respiratory and/or the photosynthetic chain. The immediate electron acceptor for the enzyme in this species is believed to be plastoquinone. Couples the redox reaction to proton translocation, and thus conserves the redox energy in a proton gradient. Cyanobacterial NDH-1 also plays a role in inorganic carbon-concentration. The protein is NAD(P)H-quinone oxidoreductase subunit L of Prochlorococcus marinus (strain AS9601).